A 130-amino-acid chain; its full sequence is Ribosome-binding factor A (130 aa).

Belongs to the RbfA family. Monomer. Binds 30S ribosomal subunits, but not 50S ribosomal subunits or 70S ribosomes.

It localises to the cytoplasm. Functionally, one of several proteins that assist in the late maturation steps of the functional core of the 30S ribosomal subunit. Associates with free 30S ribosomal subunits (but not with 30S subunits that are part of 70S ribosomes or polysomes). Required for efficient processing of 16S rRNA. May interact with the 5'-terminal helix region of 16S rRNA. The chain is Ribosome-binding factor A from Prochlorococcus marinus (strain SARG / CCMP1375 / SS120).